The primary structure comprises 163 residues: Regulatory protein RecX (163 aa).

Positions 1–21 (MSDAEDIPTGRKRRPREQTPV) are disordered.

Belongs to the RecX family.

It is found in the cytoplasm. Its function is as follows. Modulates RecA activity. In Stenotrophomonas maltophilia (strain R551-3), this protein is Regulatory protein RecX.